The following is a 215-amino-acid chain: Large ribosomal subunit protein bL25 (215 aa).

The segment covering 1 to 10 has biased composition (polar residues); it reads MAKSASNQLR. Disordered regions lie at residues 1–25 and 187–215; these read MAKSASNQLRVTVRTETGKGASRRA and ELEGEVAGAEEAEEAAVEAGEAEAAGESE.

This sequence belongs to the bacterial ribosomal protein bL25 family. CTC subfamily. As to quaternary structure, part of the 50S ribosomal subunit; part of the 5S rRNA/L5/L18/L25 subcomplex. Contacts the 5S rRNA. Binds to the 5S rRNA independently of L5 and L18.

Its function is as follows. This is one of the proteins that binds to the 5S RNA in the ribosome where it forms part of the central protuberance. The sequence is that of Large ribosomal subunit protein bL25 from Mycobacterium bovis (strain ATCC BAA-935 / AF2122/97).